A 154-amino-acid chain; its full sequence is UPF0178 protein GDI0551/Gdia_1457 (154 aa).

The protein belongs to the UPF0178 family.

In Gluconacetobacter diazotrophicus (strain ATCC 49037 / DSM 5601 / CCUG 37298 / CIP 103539 / LMG 7603 / PAl5), this protein is UPF0178 protein GDI0551/Gdia_1457.